The following is a 460-amino-acid chain: 3-ketoacyl-CoA synthase 7 (460 aa).

The chain crosses the membrane as a helical span at residues 21 to 41 (FHQFLVASACVLIAVFGYYFF). The 291-residue stretch at 38–328 (YYFFKPRCII…YIISFIQRKW (291 aa)) folds into the FAE domain. Active-site residues include Cys183, His262, His345, His349, and Asn382.

Belongs to the thiolase-like superfamily. Chalcone/stilbene synthases family. In terms of tissue distribution, expressed in flowers.

The protein localises to the membrane. It catalyses the reaction a very-long-chain acyl-CoA + malonyl-CoA + H(+) = a very-long-chain 3-oxoacyl-CoA + CO2 + CoA. The protein operates within lipid metabolism; fatty acid biosynthesis. The sequence is that of 3-ketoacyl-CoA synthase 7 from Arabidopsis thaliana (Mouse-ear cress).